An 887-amino-acid polypeptide reads, in one-letter code: Exocyst complex component SEC3A (887 aa).

2 coiled-coil regions span residues 221–248 (IGEA…AILE) and 281–301 (LRHM…LEMQ). Residues 542–581 (GAGNDKKSQSNNDDGNDDDDLGIMDIDETDKKPGKNSPDL) form a disordered region. Residues 555-569 (DGNDDDDLGIMDIDE) are compositionally biased toward acidic residues.

It belongs to the SEC3 family. The exocyst complex is composed of SEC3, SEC5, SEC6, SEC8, SEC10, EXO70A1 and EXO84B. Interacts with EXO70A1, SEC5A and ICR1, but not with ICR2. Binds to EXO70H1. Binds directly to B1L. Widely expressed. Preferentially expressed in tissues containing dividing and expanding cells, such as the shoot apical meristem, root tip, lateral root primordia and developing embryos.

The protein localises to the cytoplasm. Its subcellular location is the cytosol. The protein resides in the cell membrane. It localises to the cytoskeleton. It is found in the phragmoplast. The protein localises to the secreted. Its subcellular location is the extracellular exosome. In terms of biological role, component of the exocyst complex involved in the docking of exocytic vesicles with fusion sites on the plasma membrane during regulated or polarized secretion. Involved in polarized cell growth and organ morphogenesis. During cytokinesis, involved in cell plate initiation, cell plate maturation and formation of new primary cell wall. During cytokinesis, involved in cell plate initiation, cell plate maturation and formation of new primary cell wall. The chain is Exocyst complex component SEC3A from Arabidopsis thaliana (Mouse-ear cress).